Here is a 467-residue protein sequence, read N- to C-terminus: NADH-ubiquinone oxidoreductase chain 4 (467 aa).

The next 13 helical transmembrane spans lie at S21–Y40, M54–W74, S79–C99, F105–A125, V135–V155, L168–V188, P207–I227, V239–I259, L266–L286, L297–M317, F330–C350, L367–L387, and V420–M440.

This sequence belongs to the complex I subunit 4 family.

It is found in the mitochondrion membrane. It carries out the reaction a ubiquinone + NADH + 5 H(+)(in) = a ubiquinol + NAD(+) + 4 H(+)(out). In terms of biological role, core subunit of the mitochondrial membrane respiratory chain NADH dehydrogenase (Complex I) that is believed to belong to the minimal assembly required for catalysis. Complex I functions in the transfer of electrons from NADH to the respiratory chain. The immediate electron acceptor for the enzyme is believed to be ubiquinone. This Debaryomyces hansenii (strain ATCC 36239 / CBS 767 / BCRC 21394 / JCM 1990 / NBRC 0083 / IGC 2968) (Yeast) protein is NADH-ubiquinone oxidoreductase chain 4 (ND4).